The primary structure comprises 141 residues: Large ribosomal subunit protein uL11 (141 aa).

Belongs to the universal ribosomal protein uL11 family. In terms of assembly, part of the ribosomal stalk of the 50S ribosomal subunit. Interacts with L10 and the large rRNA to form the base of the stalk. L10 forms an elongated spine to which L12 dimers bind in a sequential fashion forming a multimeric L10(L12)X complex. Post-translationally, one or more lysine residues are methylated.

Forms part of the ribosomal stalk which helps the ribosome interact with GTP-bound translation factors. The chain is Large ribosomal subunit protein uL11 from Chlorobium luteolum (strain DSM 273 / BCRC 81028 / 2530) (Pelodictyon luteolum).